Here is a 256-residue protein sequence, read N- to C-terminus: Small ribosomal subunit protein eS1 (256 aa).

A compositionally biased stretch (basic residues) spans 1 to 18 (MAVGKNKRLSKGKKGLKK). Residues 1 to 20 (MAVGKNKRLSKGKKGLKKRT) form a disordered region. A2 is subject to N-acetylalanine; partial.

This sequence belongs to the eukaryotic ribosomal protein eS1 family. In terms of assembly, component of the small ribosomal subunit. Mature ribosomes consist of a small (40S) and a large (60S) subunit. The 40S subunit contains about 33 different proteins and 1 molecule of RNA (18S). The 60S subunit contains about 49 different proteins and 3 molecules of RNA (25S, 5.8S and 5S).

It is found in the cytoplasm. The polypeptide is Small ribosomal subunit protein eS1 (rps1) (Talaromyces marneffei (strain ATCC 18224 / CBS 334.59 / QM 7333) (Penicillium marneffei)).